Reading from the N-terminus, the 419-residue chain is Tyrosine--tRNA ligase (419 aa).

Tyrosine 42 lines the L-tyrosine pocket. A 'HIGH' region motif is present at residues 47–56 (ATAPSLHVGS). Tyrosine 179 and glutamine 183 together coordinate L-tyrosine. Positions 239–243 (KMGKT) match the 'KMSKS' region motif. ATP is bound at residue lysine 242. Residues 353 to 418 (IVLANLFADA…GKKKIVLVKP (66 aa)) enclose the S4 RNA-binding domain.

This sequence belongs to the class-I aminoacyl-tRNA synthetase family. TyrS type 1 subfamily. In terms of assembly, homodimer.

The protein resides in the cytoplasm. The enzyme catalyses tRNA(Tyr) + L-tyrosine + ATP = L-tyrosyl-tRNA(Tyr) + AMP + diphosphate + H(+). In terms of biological role, catalyzes the attachment of tyrosine to tRNA(Tyr) in a two-step reaction: tyrosine is first activated by ATP to form Tyr-AMP and then transferred to the acceptor end of tRNA(Tyr). This Caulobacter sp. (strain K31) protein is Tyrosine--tRNA ligase.